A 382-amino-acid polypeptide reads, in one-letter code: SPRY domain-containing protein C285.10c (382 aa).

A helical membrane pass occupies residues 21–41 (LAILFIFIALAAVIVLLICLL). The B30.2/SPRY domain occupies 79-284 (GFSLLDDMGK…LHVNLGQAGY (206 aa)). The tract at residues 304 to 382 (APPPSYSTSQ…MHSMPATDEV (79 aa)) is disordered. 2 stretches are compositionally biased toward polar residues: residues 309 to 334 (YSTS…QGDT) and 361 to 372 (FSPSSSNNQAYQ).

The protein localises to the cytoplasm. It localises to the membrane. The chain is SPRY domain-containing protein C285.10c from Schizosaccharomyces pombe (strain 972 / ATCC 24843) (Fission yeast).